A 206-amino-acid polypeptide reads, in one-letter code: dCTP deaminase, dUMP-forming (206 aa).

DCTP contacts are provided by residues 117–122 (RSSFGR), aspartate 135, 143–145 (TLE), glutamine 163, tyrosine 177, lysine 184, and glutamine 188. Catalysis depends on glutamate 145, which acts as the Proton donor/acceptor.

The protein belongs to the dCTP deaminase family. As to quaternary structure, homotrimer.

It carries out the reaction dCTP + 2 H2O = dUMP + NH4(+) + diphosphate. It participates in pyrimidine metabolism; dUMP biosynthesis; dUMP from dCTP: step 1/1. Functionally, bifunctional enzyme that catalyzes both the deamination of dCTP to dUTP and the hydrolysis of dUTP to dUMP without releasing the toxic dUTP intermediate. This chain is dCTP deaminase, dUMP-forming, found in Methanococcus maripaludis (strain C6 / ATCC BAA-1332).